A 435-amino-acid chain; its full sequence is Eukaryotic translation initiation factor 3 subunit E (435 aa).

The region spanning 241-409 (TDMFFSPSYI…GTVIMNHPPQ (169 aa)) is the PCI domain.

It belongs to the eIF-3 subunit E family. In terms of assembly, component of the eukaryotic translation initiation factor 3 (eIF-3) complex.

It is found in the cytoplasm. In terms of biological role, component of the eukaryotic translation initiation factor 3 (eIF-3) complex, which is involved in protein synthesis of a specialized repertoire of mRNAs and, together with other initiation factors, stimulates binding of mRNA and methionyl-tRNAi to the 40S ribosome. The eIF-3 complex specifically targets and initiates translation of a subset of mRNAs involved in cell proliferation. This Phaeosphaeria nodorum (strain SN15 / ATCC MYA-4574 / FGSC 10173) (Glume blotch fungus) protein is Eukaryotic translation initiation factor 3 subunit E.